A 780-amino-acid polypeptide reads, in one-letter code: MTKKQAIKRKVKEPEPTNEQSSASEPSDNEEDDDLLQAVKDPGEDTTDDEGIDQEYQSDSSEDLEFESDEEGNYLGRKANNEAEGDAEEDEDDDEEEDEDSDEASEDNDDAEEEKPSSSMTAAVQTKVEPIIQIIPRDPSKPEYEDSDTSDEEDIRNTVGNIPMHWYDEYKHIGYDWDAKKIVKPPKGDQIDDFLRKIEDPNFWRTVKDPQTGQEVLLTDEDIALIKRVNSGRIPNAEHDEYAPWIEWFTSEVEKMPIKNVPDHKRSFLPSVSEKKKVSRMVHALKMGWMKTTEEVEREKQKKRGPKFYMLWETDTGRESMRRIHDPVSAPKRDLPGHAESYNPPPEYLFDEKETKEWLKQKDEPHKRKLHFMPQKFKSLREVPAYSRYLRERFLRCLDLYLCPRAKRVKLNIDAEYLIPKLPSPRDLQPFPTVESLVYRGHTDLVRSVSVEPKGEYMASGSDDKTVKIWEIATGRCIRTIETNDVVRCVAWCPNAKLSIIAVATGSRLLLINPKVGDKLLIKKTDDLLAASPSLDVIDNERIKTAVQWSNAEPEEQEKGVRVVITHFKPIRQVTWHGRGDYLATVMPEGANRSALIHQLSKRRSQIPFSKSKGLIQCVLFHPVKPCFFVATQHNIRIYDLVKQELIKKLLTNSKWISGMSIHPKGDNLLVSTYDKKMLWFDLDLSTKPYQTMRLHRNAVRSVAFHLRYPLFASGSDDQAVIVSHGMVYNDLLQNPLIVPLKKLQTHEKRDEFGVLDVSWHPVQPWVFSTGADCTIRLYT.

The span at Met-1–Val-11 shows a compositional bias: basic residues. Residues Met-1–Ile-155 form a disordered region. Polar residues predominate over residues Thr-17–Pro-26. Acidic residues-rich tracts occupy residues Glu-44–Asp-53, Ser-60–Gly-72, Ala-83–Glu-113, and Glu-145–Asp-154. 7 WD repeats span residues Gly-441–Glu-482, Asn-484–Ile-522, Thr-566–Pro-608, Lys-611–Lys-649, Thr-652–Gln-691, Leu-695–Gln-734, and Arg-750–Thr-780.

The protein belongs to the WD repeat BOP1/ERB1 family.

Its subcellular location is the nucleus. The protein resides in the nucleolus. It localises to the nucleoplasm. In terms of biological role, required for maturation of ribosomal RNAs and formation of the large ribosomal subunit. The sequence is that of Ribosome biogenesis protein BOP1 homolog from Drosophila virilis (Fruit fly).